Here is a 422-residue protein sequence, read N- to C-terminus: Probable metallocarboxypeptidase A (422 aa).

An N-terminal signal peptide occupies residues 1–17; the sequence is MRSVLSLALLAANVVTA. The propeptide at 18–112 is activation peptide; it reads AVVAPFDYSG…FEAYSAGYAP (95 aa). The 301-residue stretch at 119–419 folds into the Peptidase M14 domain; the sequence is SYHSYQDHLS…AGTVAMLKAV (301 aa). Positions 179 and 182 each coordinate Zn(2+). Substrate contacts are provided by residues 179–182, Arg-237, and 254–255; these read HARE and NR. The cysteines at positions 248 and 271 are disulfide-linked. His-309 is a binding site for Zn(2+). A substrate-binding site is contributed by 310–311; that stretch reads SY. Residue Glu-385 is the Proton donor/acceptor of the active site.

It belongs to the peptidase M14 family. The cofactor is Zn(2+).

Its subcellular location is the secreted. Functionally, extracellular metalloprotease that contributes to pathogenicity. The protein is Probable metallocarboxypeptidase A (MCPA) of Arthroderma benhamiae (strain ATCC MYA-4681 / CBS 112371) (Trichophyton mentagrophytes).